We begin with the raw amino-acid sequence, 291 residues long: G1/S-specific cyclin-D1 (291 aa).

T282 carries the post-translational modification Phosphothreonine.

Belongs to the cyclin family. Cyclin D subfamily. As to quaternary structure, interacts with the cdk4 and cdk6 protein kinases to form a serine/threonine kinase holoenzyme complex. The cyclin subunit imparts substrate specificity to the complex. In terms of processing, phosphorylation at Thr-282 by MAP kinases is required for ubiquitination and degradation by the DCX(AMBRA1) complex. Ubiquitinated by the DCX(AMBRA1) complex during the transition from G1 to S cell phase, leading to its degradation. The DCX(AMBRA1) complex represents the major regulator of CCND1 stability during the G1/S transition.

The protein resides in the nucleus. It is found in the cytoplasm. In terms of biological role, regulatory component of the cyclin D1-CDK4 (DC) complex that phosphorylates and inhibits members of the retinoblastoma (RB) protein family including RB1 and regulates the cell-cycle during G(1)/S transition. Phosphorylation of RB1 allows dissociation of the transcription factor E2F from the RB/E2F complex and the subsequent transcription of E2F target genes which are responsible for the progression through the G(1) phase. Hypophosphorylates RB1 in early G(1) phase. Cyclin D-CDK4 complexes are major integrators of various mitogenenic and antimitogenic signals. The protein is G1/S-specific cyclin-D1 (ccnd1) of Xenopus laevis (African clawed frog).